The chain runs to 198 residues: Protein XA-1 (198 aa).

An N-terminal signal peptide occupies residues 1 to 18; the sequence is MFFYVLLLALMAQGWSLP. Positions 17 to 198 are disordered; sequence LPQGKTGEDS…KHGQEQGKKH (182 aa). Over residues 29 to 44 the composition is skewed to pro residues; that stretch reads FRPPSPPMGPSLPPPV. The span at 46–59 shows a compositional bias: basic and acidic residues; it reads HDLHRPSGHPEEFR. The segment covering 76–86 has biased composition (basic residues); the sequence is GRPKRDLHHGK. A compositionally biased stretch (basic and acidic residues) spans 95-104; it reads HTGEVLHHTD. The span at 134–145 shows a compositional bias: basic residues; it reads HGRHRRDLHHGK. Basic and acidic residues predominate over residues 181–198; the sequence is NSSEEKRPKHGQEQGKKH.

As to expression, expressed in the periphery of the cement gland as well as in the region of the hatching gland.

The protein resides in the secreted. The chain is Protein XA-1 from Xenopus laevis (African clawed frog).